A 374-amino-acid polypeptide reads, in one-letter code: UDP-N-acetylglucosamine--N-acetylmuramyl-(pentapeptide) pyrophosphoryl-undecaprenol N-acetylglucosamine transferase (374 aa).

UDP-N-acetyl-alpha-D-glucosamine is bound by residues 13-15, Asn124, Arg165, Ser193, and Gln294; that span reads TGG.

It belongs to the glycosyltransferase 28 family. MurG subfamily.

The protein resides in the cell inner membrane. The catalysed reaction is di-trans,octa-cis-undecaprenyl diphospho-N-acetyl-alpha-D-muramoyl-L-alanyl-D-glutamyl-meso-2,6-diaminopimeloyl-D-alanyl-D-alanine + UDP-N-acetyl-alpha-D-glucosamine = di-trans,octa-cis-undecaprenyl diphospho-[N-acetyl-alpha-D-glucosaminyl-(1-&gt;4)]-N-acetyl-alpha-D-muramoyl-L-alanyl-D-glutamyl-meso-2,6-diaminopimeloyl-D-alanyl-D-alanine + UDP + H(+). Its pathway is cell wall biogenesis; peptidoglycan biosynthesis. Its function is as follows. Cell wall formation. Catalyzes the transfer of a GlcNAc subunit on undecaprenyl-pyrophosphoryl-MurNAc-pentapeptide (lipid intermediate I) to form undecaprenyl-pyrophosphoryl-MurNAc-(pentapeptide)GlcNAc (lipid intermediate II). This chain is UDP-N-acetylglucosamine--N-acetylmuramyl-(pentapeptide) pyrophosphoryl-undecaprenol N-acetylglucosamine transferase, found in Rhizobium meliloti (strain 1021) (Ensifer meliloti).